Consider the following 134-residue polypeptide: ATP synthase epsilon chain (134 aa).

This sequence belongs to the ATPase epsilon chain family. In terms of assembly, F-type ATPases have 2 components, CF(1) - the catalytic core - and CF(0) - the membrane proton channel. CF(1) has five subunits: alpha(3), beta(3), gamma(1), delta(1), epsilon(1). CF(0) has three main subunits: a, b and c.

The protein resides in the cell membrane. Its function is as follows. Produces ATP from ADP in the presence of a proton gradient across the membrane. The chain is ATP synthase epsilon chain from Anoxybacillus flavithermus (strain DSM 21510 / WK1).